The following is a 623-amino-acid chain: Set1/Ash2 histone methyltransferase complex subunit ASH2 (623 aa).

The span at 1 to 18 (MAAAGAGPGPGVSAGPGP) shows a compositional bias: gly residues. Residues 1–62 (MAAAGAGPGP…SGEAESGDAN (62 aa)) form a PHD-type; atypical zinc finger. The segment at 1–99 (MAAAGAGPGP…MDTQAGSVDE (99 aa)) is disordered. The segment covering 36–56 (AAGAGEGPSAAPGAEPSSGEA) has biased composition (low complexity). Residues 63 to 172 (LVDVSGLETE…MCLSALANLT (110 aa)) are DNA-binding. Polar residues predominate over residues 84–95 (GDTSEVMDTQAG). Ser-96 is modified (phosphoserine). The segment at 112-145 (CGICTKWFTADTFGIDTSSCLPFMTNYSFHCNVC) adopts a C4-type zinc-finger fold. The span at 230-247 (LVKEHPDPGSKDPEEDYP) shows a compositional bias: basic and acidic residues. Positions 230–326 (LVKEHPDPGS…AQRLPPHGYP (97 aa)) are disordered. Polar residues predominate over residues 265-277 (NQKQSSAVSASGN). Positions 278-290 (LNGGIAAGSSGKG) are enriched in gly residues. Arg-291 carries the asymmetric dimethylarginine; by PRMT1 and PRMT5 modification. Residue Ser-311 is modified to Phosphoserine. An interaction with RBBP5 region spans residues 311 to 623 (SDPLFSAQRL…DGRRSPPWEP (313 aa)). Residues 355–578 (LDCWAGKPIP…VSINFGPSFK (224 aa)) form the B30.2/SPRY domain.

As to quaternary structure, interacts with HCFC1. Core component of several methyltransferase-containing complexes including MLL1/MLL, MLL2/3 (also named ASCOM complex) and MLL4/WBP7. Each complex is at least composed of ASH2L, RBBP5, WDR5, DPY30, one or more specific histone methyltransferases (KMT2A/MLL1, KMT2D/MLL2, KMT2C/MLL3 and KMT2B/MLL4), and the facultative components PAGR1, BACC1, CHD8, E2F6, HCFC1, HCFC2, HSP70, INO80C, KDM6A, KANSL1, LAS1L, MAX, MCRS1, MEN1, MGA, KAT8/MOF, NCOA6, PAXIP1/PTIP, PELP1, PHF20, PRP31, RING2, RUVB1/TIP49A, RUVB2/TIP49B, SENP3, TAF1, TAF4, TAF6, TAF7, TAF9, TEX10 and alpha- and beta-tubulin. Component of the SET1 complex, at least composed of the catalytic subunit (SETD1A or SETD1B), WDR5, WDR82, RBBP5, ASH2L/ASH2, CXXC1/CFP1, HCFC1 and DPY30. Found in a complex with RBBP5, ASH2L, DPY30, KMT2A, KMT2D and WDR5. Component of a histone methylation complex composed of at least ZNF335, RBBP5, ASH2L and WDR5; the complex may have histone H3-specific methyltransferase activity, however does not have specificity for 'Lys-4' of histone H3. Within the complex, interacts with ZNF335. Interacts with RBBP5. Components of this complex may associate with components of a nuclear receptor-mediated transcription complex to form a complex at least composed of ZNF335, HCFC1, CCAR2, EMSY, MKI67, RBBP5, ASH2L and WDR5. Within this complex also interacts with CCAR2 and EMSY. Interacts with DPY30. Interacts with SETD1A and SETD1B. Post-translationally, both monomethylated and dimethylated on arginine residues in the C-terminus. Arg-291 is the major site. Methylation is not required for nuclear localization, nor for MLL complex integrity or maintenance of global histone H3K4me3 levels. In terms of tissue distribution, ubiquitously expressed, with abundant expression in the heart, skeletal muscle and kidney. Low expression is seen in spleen, lung and testis.

The protein localises to the nucleus. Its function is as follows. Transcriptional regulator. Component or associated component of some histone methyltransferase complexes which regulates transcription through recruitment of those complexes to gene promoters. Component of the Set1/Ash2 histone methyltransferase (HMT) complex, a complex that specifically methylates 'Lys-4' of histone H3, but not if the neighboring 'Lys-9' residue is already methylated. As part of the MLL1/MLL complex it is involved in methylation and dimethylation at 'Lys-4' of histone H3. May play a role in hematopoiesis. In association with RBBP5 and WDR5, stimulates the histone methyltransferase activities of KMT2A, KMT2B, KMT2C, KMT2D, SETD1A and SETD1B. This chain is Set1/Ash2 histone methyltransferase complex subunit ASH2 (Ash2l), found in Mus musculus (Mouse).